Consider the following 376-residue polypeptide: Protein-glutamate methylesterase/protein-glutamine glutaminase 1 (376 aa).

Residues 4 to 121 enclose the Response regulatory domain; it reads KVLVVDDSSF…ARNRDEAVSL (118 aa). Asp-55 is modified (4-aspartylphosphate). The disordered stretch occupies residues 138–174; the sequence is RPVASSTPVQERPQSTLNRPTTGLRREAPAQAPVSRA. Residues 141–158 are compositionally biased toward polar residues; it reads ASSTPVQERPQSTLNRPT. Positions 183–376 constitute a CheB-type methylesterase domain; that stretch reads SGKKYQLTAI…ERMLVEVGLA (194 aa). Active-site residues include Ser-195, His-222, and Asp-318.

Belongs to the CheB family. Post-translationally, phosphorylated by CheA. Phosphorylation of the N-terminal regulatory domain activates the methylesterase activity.

The protein localises to the cytoplasm. The enzyme catalyses [protein]-L-glutamate 5-O-methyl ester + H2O = L-glutamyl-[protein] + methanol + H(+). It carries out the reaction L-glutaminyl-[protein] + H2O = L-glutamyl-[protein] + NH4(+). Involved in chemotaxis. Part of a chemotaxis signal transduction system that modulates chemotaxis in response to various stimuli. Catalyzes the demethylation of specific methylglutamate residues introduced into the chemoreceptors (methyl-accepting chemotaxis proteins or MCP) by CheR. Also mediates the irreversible deamidation of specific glutamine residues to glutamic acid. In Vibrio vulnificus (strain CMCP6), this protein is Protein-glutamate methylesterase/protein-glutamine glutaminase 1.